Consider the following 274-residue polypeptide: SPbeta prophage-derived uncharacterized protein YomD (274 aa).

In Bacillus subtilis (strain 168), this protein is SPbeta prophage-derived uncharacterized protein YomD (yomD).